Here is an 888-residue protein sequence, read N- to C-terminus: E3 ubiquitin-protein ligase SH3RF1 (888 aa).

The RING-type zinc finger occupies 12 to 53 (CPVCLERLDASAKVLPCQHTFCKRCLLGIVGSRNELRCPECR). A compositionally biased stretch (polar residues) spans 108–127 (SSKDLQSSQGGQQPRVQSWS). The tract at residues 108–128 (SSKDLQSSQGGQQPRVQSWSP) is disordered. SH3 domains lie at 134–193 (PQLP…IIKP) and 196–259 (QPPP…FNSA). Residues 275-321 (DAGECSSAAAQSSTAPKHSDTKKNTKKRHSFTSLTMANKSSQASQNR) form a disordered region. The tract at residues 292 to 362 (HSDTKKNTKK…APSQVHISTT (71 aa)) is interaction with RAC1. S304 is subject to Phosphoserine. Residues 305–321 (FTSLTMANKSSQASQNR) show a composition bias toward polar residues. The interval 440 to 543 (HLRPQTRPSV…STAGGPAQKL (104 aa)) is interaction with AKT2. The 62-residue stretch at 445–506 (TRPSVYVAIY…PGNYVAPVTR (62 aa)) folds into the SH3 3 domain. Disordered regions lie at residues 516-548 (VPMSTAGQTSRGVTMVSPSTAGGPAQKLQGNGV), 620-639 (SVGLSHHSLASPQPAPLMPG), and 684-741 (TVLP…ASPT). Residues 520–535 (TAGQTSRGVTMVSPST) show a composition bias toward polar residues. S532 is modified (phosphoserine). Polar residues predominate over residues 692–704 (SPDSASSACGNSS). Over residues 707–718 (KPDKDSKKEKKG) the composition is skewed to basic and acidic residues. Position 735 is a phosphoserine (S735). In terms of domain architecture, SH3 4 spans 829-888 (VVCERHRVVVSYPPQSEAELELKEGDIVFVHKKREDGWFKGTLQRNGKTGLFPGSFVENI).

Belongs to the SH3RF family. Interacts with RAC1; in a GTP-dependent manner. Interacts with MAP3K10/MLK2 and MAP3K11/MLK3. Interacts with MAPK8IP; this interaction leads to the PJAC complex (POSH-JIP or SH3RF1/MAPK8IP apoptotic complex) with a 1:1 ratio. Interacts with SIAH1. Interacts with HERP1. Probably part of a signaling complex that may contain SH3RF1, MAPK8IP, DLK1, MAP2K4/MKK4, MAP2K7/MKK7, MAPK8/JNK1, MAPK9/JNK2, AKT1 and AKT2. Found in a complex with RAC2, MAP3K7/TAK1, MAP2K7/MKK7, MAPK8IP1/JIP1, MAPK8/JNK1 and MAPK9/JNK2. Found in a complex with RAC1, MAP3K11/MLK3, MAP2K7/MKK7, MAPK8IP1/JIP1 and MAPK8/JNK1. Interacts with SH3RF2. Phosphorylated at Ser-304 by AKT1 and AKT2. When phosphorylated, it has reduced ability to bind Rac. Post-translationally, autoubiquitinated. Ubiquitinated by SH3RF2, leading to proteasome-mediated degradation.

The protein resides in the cytoplasm. The protein localises to the perinuclear region. It localises to the cell projection. Its subcellular location is the lamellipodium. It is found in the golgi apparatus. The protein resides in the trans-Golgi network. It catalyses the reaction S-ubiquitinyl-[E2 ubiquitin-conjugating enzyme]-L-cysteine + [acceptor protein]-L-lysine = [E2 ubiquitin-conjugating enzyme]-L-cysteine + N(6)-ubiquitinyl-[acceptor protein]-L-lysine.. The protein operates within protein modification; protein ubiquitination. In terms of biological role, has E3 ubiquitin-protein ligase activity. In the absence of an external substrate, it can catalyze self-ubiquitination. Stimulates ubiquitination of potassium channel KCNJ1, enhancing it's dynamin-dependent and clathrin-independent endocytosis. Acts as a scaffold protein that coordinates with MAPK8IP1/JIP1 in organizing different components of the JNK pathway, including RAC1 or RAC2, MAP3K11/MLK3 or MAP3K7/TAK1, MAP2K7/MKK7, MAPK8/JNK1 and/or MAPK9/JNK2 into a functional multiprotein complex to ensure the effective activation of the JNK signaling pathway. Regulates the differentiation of CD4(+) and CD8(+) T-cells and promotes T-helper 1 (Th1) cell differentiation. Regulates the activation of MAPK8/JNK1 and MAPK9/JNK2 in CD4(+) T-cells and the activation of MAPK8/JNK1 in CD8(+) T-cells. Plays a crucial role in the migration of neocortical neurons in the developing brain. Controls proper cortical neuronal migration and the formation of proximal cytoplasmic dilation in the leading process (PCDLP) in migratory neocortical neurons by regulating the proper localization of activated RAC1 and F-actin assembly. Its function is as follows. (Microbial infection) Plays an essential role in the targeting of HIV-1 Gag to the plasma membrane, this function is dependent on it's RING domain, and hence it's E3 ligase activity. This is E3 ubiquitin-protein ligase SH3RF1 (SH3RF1) from Homo sapiens (Human).